The following is a 320-amino-acid chain: Cytochrome f (320 aa).

Residues 1 to 36 form the signal peptide; sequence MKLNSLINLIQKSIYSCTLLLTILNIICIAPNSSNA. Heme-binding residues include F37, C57, C60, and H61. The chain crosses the membrane as a helical span at residues 286-305; it reads IKGMIAFFFVSVLAQIFFVL.

Belongs to the cytochrome f family. The 4 large subunits of the cytochrome b6-f complex are cytochrome b6, subunit IV (17 kDa polypeptide, petD), cytochrome f and the Rieske protein, while the 4 small subunits are PetG, PetL, PetM and PetN. The complex functions as a dimer. It depends on heme as a cofactor.

It is found in the plastid. It localises to the chloroplast thylakoid membrane. In terms of biological role, component of the cytochrome b6-f complex, which mediates electron transfer between photosystem II (PSII) and photosystem I (PSI), cyclic electron flow around PSI, and state transitions. The protein is Cytochrome f (petA) of Porphyra purpurea (Red seaweed).